A 438-amino-acid chain; its full sequence is V-type ATP synthase beta chain (438 aa).

It belongs to the ATPase alpha/beta chains family.

Produces ATP from ADP in the presence of a proton gradient across the membrane. The V-type beta chain is a regulatory subunit. The protein is V-type ATP synthase beta chain of Protochlamydia amoebophila (strain UWE25).